The following is a 375-amino-acid chain: Phosphoglucan phosphatase DSP4, amyloplastic (375 aa).

An amyloplast-targeting transit peptide spans 1–42; it reads MFCVQNLPRSSALPLQSFKSHQRRPPCSVNTLGVMSNVNLHR. The segment at 49–71 is disordered; sequence ISGPTSSAETSDANVEEEKSETY. Positions 51–61 are enriched in polar residues; it reads GPTSSAETSDA. The Tyrosine-protein phosphatase domain maps to 92–249; sequence NYNFIRPDLI…AADILTGLRK (158 aa). Cys193 functions as the Phosphocysteine intermediate in the catalytic mechanism. 194-199 provides a ligand contact to substrate; the sequence is TAGLGR. A polysaccharide binding region spans residues 254-330; that stretch reads LTWKNPDCTT…NKDGHVNNFV (77 aa).

As to expression, expressed in phloem parenchyma of 16-24 week old seedlings and 2 year old trees (at protein level). Expressed in leaves of 16-24 week old seedlings and 2 year old trees.

Its subcellular location is the plastid. It is found in the amyloplast. The protein resides in the nucleus. In terms of biological role, starch granule-associated phosphoglucan phosphatase involved in the control of starch accumulation. Acts as a major regulator of the initial steps of starch degradation at the granule surface. Functions during the day by dephosphorylating the night-accumulated phospho-oligosaccharides. Can release phosphate from both the C6 and the C3 positions. In Castanea sativa (Sweet chestnut), this protein is Phosphoglucan phosphatase DSP4, amyloplastic.